Consider the following 360-residue polypeptide: Glutamate--cysteine ligase (360 aa).

This sequence belongs to the glutamate--cysteine ligase type 2 family. YbdK subfamily.

It catalyses the reaction L-cysteine + L-glutamate + ATP = gamma-L-glutamyl-L-cysteine + ADP + phosphate + H(+). In terms of biological role, catalyzes the synthesis of gamma-glutamylcysteine (gamma-GC), the main low-molecular-weight thiol compound instead of glutathione in halophilic archaea. This Halobacterium salinarum (strain ATCC 29341 / DSM 671 / R1) protein is Glutamate--cysteine ligase.